The following is a 308-amino-acid chain: Glutaminase (308 aa).

Substrate contacts are provided by S66, N117, E161, N168, Y192, Y244, and V262.

The protein belongs to the glutaminase family. Homotetramer.

The enzyme catalyses L-glutamine + H2O = L-glutamate + NH4(+). The sequence is that of Glutaminase from Cronobacter sakazakii (strain ATCC BAA-894) (Enterobacter sakazakii).